Here is a 388-residue protein sequence, read N- to C-terminus: Chorismate synthase (388 aa).

NADP(+) is bound by residues R39 and R45. Residues 132–134, 251–252, G296, 311–315, and R337 contribute to the FMN site; these read RSS, NA, and KPIPT.

Belongs to the chorismate synthase family. As to quaternary structure, homotetramer. FMNH2 is required as a cofactor.

The enzyme catalyses 5-O-(1-carboxyvinyl)-3-phosphoshikimate = chorismate + phosphate. The protein operates within metabolic intermediate biosynthesis; chorismate biosynthesis; chorismate from D-erythrose 4-phosphate and phosphoenolpyruvate: step 7/7. Catalyzes the anti-1,4-elimination of the C-3 phosphate and the C-6 proR hydrogen from 5-enolpyruvylshikimate-3-phosphate (EPSP) to yield chorismate, which is the branch point compound that serves as the starting substrate for the three terminal pathways of aromatic amino acid biosynthesis. This reaction introduces a second double bond into the aromatic ring system. In Staphylococcus carnosus (strain TM300), this protein is Chorismate synthase.